We begin with the raw amino-acid sequence, 376 residues long: CCA-adding enzyme (376 aa).

The ATP site is built by Gly-23 and Arg-26. Gly-23 and Arg-26 together coordinate CTP. Mg(2+)-binding residues include Glu-36 and Asp-38. The ATP site is built by Arg-106, Arg-152, and Arg-155. The CTP site is built by Arg-106, Arg-152, and Arg-155.

This sequence belongs to the tRNA nucleotidyltransferase/poly(A) polymerase family. Bacterial CCA-adding enzyme type 2 subfamily. The cofactor is Mg(2+).

The enzyme catalyses a tRNA precursor + 2 CTP + ATP = a tRNA with a 3' CCA end + 3 diphosphate. It catalyses the reaction a tRNA with a 3' CCA end + 2 CTP + ATP = a tRNA with a 3' CCACCA end + 3 diphosphate. In terms of biological role, catalyzes the addition and repair of the essential 3'-terminal CCA sequence in tRNAs without using a nucleic acid template. Adds these three nucleotides in the order of C, C, and A to the tRNA nucleotide-73, using CTP and ATP as substrates and producing inorganic pyrophosphate. tRNA 3'-terminal CCA addition is required both for tRNA processing and repair. Also involved in tRNA surveillance by mediating tandem CCA addition to generate a CCACCA at the 3' terminus of unstable tRNAs. While stable tRNAs receive only 3'-terminal CCA, unstable tRNAs are marked with CCACCA and rapidly degraded. This Coxiella burnetii (strain RSA 331 / Henzerling II) protein is CCA-adding enzyme.